The chain runs to 478 residues: Adenosylhomocysteinase (478 aa).

3 residues coordinate substrate: T67, D144, and E204. 205–207 (TTT) serves as a coordination point for NAD(+). Positions 234 and 238 each coordinate substrate. Residues N239, 268–273 (GYGDVG), E291, N326, 347–349 (IGH), and N392 each bind NAD(+).

This sequence belongs to the adenosylhomocysteinase family. Requires NAD(+) as cofactor.

It is found in the cytoplasm. The catalysed reaction is S-adenosyl-L-homocysteine + H2O = L-homocysteine + adenosine. Its pathway is amino-acid biosynthesis; L-homocysteine biosynthesis; L-homocysteine from S-adenosyl-L-homocysteine: step 1/1. May play a key role in the regulation of the intracellular concentration of adenosylhomocysteine. The protein is Adenosylhomocysteinase of Nitrosomonas eutropha (strain DSM 101675 / C91 / Nm57).